We begin with the raw amino-acid sequence, 304 residues long: MSYRGLTILGCSSQQPTRHRNHGAYLLRWNGEGLLFDPGEGTQRQFIYANIAPTVVSRIFISHFHGDHCLGLGSMLMRLNLDRVSHPIHCYYPASGKKYFDRLRYSTIYHETIKVIEHPIDREGIVEDFGNFRIESRQLDHLVDTLGWRITEPDTTKFIPEKIKAAGLKGPIMQELINKGRVKVNDTIVHLDDVSYTRKGDSIAVVADSLPCQAIVDLARNARILLCESTYLEEHSHLAKSHYHMTAKQAAEQAKRAEVQQLILTHFSARYNTTEEFVQEAGEIFPNVFAAEEFCSYEFPKNPS.

H63, H65, D67, H68, H141, D208, and H266 together coordinate Zn(2+). Residue D67 is the Proton acceptor of the active site.

It belongs to the RNase Z family. Homodimer. It depends on Zn(2+) as a cofactor.

It carries out the reaction Endonucleolytic cleavage of RNA, removing extra 3' nucleotides from tRNA precursor, generating 3' termini of tRNAs. A 3'-hydroxy group is left at the tRNA terminus and a 5'-phosphoryl group is left at the trailer molecule.. Its function is as follows. Zinc phosphodiesterase, which displays some tRNA 3'-processing endonuclease activity. Probably involved in tRNA maturation, by removing a 3'-trailer from precursor tRNA. The polypeptide is Ribonuclease Z (Chlamydia trachomatis serovar L2 (strain ATCC VR-902B / DSM 19102 / 434/Bu)).